The chain runs to 145 residues: Phospholipase A2, membrane associated (145 aa).

The N-terminal stretch at 1 to 20 is a signal peptide; sequence MKLLLLLLVVMASDLPQAHG. 7 cysteine pairs are disulfide-bonded: Cys46–Cys138, Cys48–Cys64, Cys63–Cys118, Cys69–Cys145, Cys70–Cys111, Cys79–Cys104, and Cys97–Cys109. Residues His47, Gly49, and Gly51 each contribute to the Ca(2+) site. His67 is an active-site residue. Asp68 provides a ligand contact to Ca(2+). Asp112 is an active-site residue.

The protein belongs to the phospholipase A2 family. Ca(2+) is required as a cofactor. In terms of tissue distribution, alveolar macrophages, and at much lower levels in peripheral blood monocytes and peritoneal macrophages.

It localises to the secreted. Its subcellular location is the cell membrane. The protein localises to the mitochondrion outer membrane. The enzyme catalyses a 1,2-diacyl-sn-glycero-3-phosphoethanolamine + H2O = a 1-acyl-sn-glycero-3-phosphoethanolamine + a fatty acid + H(+). The catalysed reaction is 1-hexadecanoyl-2-(9Z-octadecenoyl)-sn-glycero-3-phosphoethanolamine + H2O = 1-hexadecanoyl-sn-glycero-3-phosphoethanolamine + (9Z)-octadecenoate + H(+). It carries out the reaction 1-hexadecanoyl-2-(9Z,12Z-octadecadienoyl)-sn-glycero-3-phosphoethanolamine + H2O = 1-hexadecanoyl-sn-glycero-3-phosphoethanolamine + (9Z,12Z)-octadecadienoate + H(+). It catalyses the reaction 1-hexadecanoyl-2-(5Z,8Z,11Z,14Z-eicosatetraenoyl)-sn-glycero-3-phosphoethanolamine + H2O = 1-hexadecanoyl-sn-glycero-3-phosphoethanolamine + (5Z,8Z,11Z,14Z)-eicosatetraenoate + H(+). The enzyme catalyses N-hexadecanoyl-1,2-di-(9Z-octadecenoyl)-sn-glycero-3-phosphoethanolamine + H2O = N-hexadecanoyl-1-(9Z-octadecenoyl)-sn-glycero-3-phosphoethanolamine + (9Z)-octadecenoate + H(+). The catalysed reaction is 1,2-dihexadecanoyl-sn-glycero-3-phospho-(1'-sn-glycerol) + H2O = 1-hexadecanoyl-sn-glycero-3-phospho-(1'-sn-glycerol) + hexadecanoate + H(+). It carries out the reaction 1-hexadecanoyl-2-(9Z-octadecenoyl)-sn-glycero-3-phosphoglycerol + H2O = 1-hexadecanoyl-sn-glycero-3-phosphoglycerol + (9Z)-octadecenoate + H(+). It catalyses the reaction 1-hexadecanoyl-2-(9Z-octadecenoyl)-sn-glycero-3-phospho-(1'-sn-glycerol) + H2O = 1-hexadecanoyl-sn-glycero-3-phospho-(1'-sn-glycerol) + (9Z)-octadecenoate + H(+). The enzyme catalyses a 1,2-diacyl-sn-glycero-3-phosphocholine + H2O = a 1-acyl-sn-glycero-3-phosphocholine + a fatty acid + H(+). The catalysed reaction is 1,2-dihexadecanoyl-sn-glycero-3-phosphocholine + H2O = 1-hexadecanoyl-sn-glycero-3-phosphocholine + hexadecanoate + H(+). It carries out the reaction 1-hexadecanoyl-2-(9Z-octadecenoyl)-sn-glycero-3-phosphocholine + H2O = 1-hexadecanoyl-sn-glycero-3-phosphocholine + (9Z)-octadecenoate + H(+). It catalyses the reaction 1-hexadecanoyl-2-(9Z,12Z-octadecadienoyl)-sn-glycero-3-phosphocholine + H2O = (9Z,12Z)-octadecadienoate + 1-hexadecanoyl-sn-glycero-3-phosphocholine + H(+). The enzyme catalyses 1-hexadecanoyl-2-(4Z,7Z,10Z,13Z,16Z,19Z-docosahexaenoyl)-sn-glycero-3-phosphocholine + H2O = (4Z,7Z,10Z,13Z,16Z,19Z)-docosahexaenoate + 1-hexadecanoyl-sn-glycero-3-phosphocholine + H(+). Its function is as follows. Secretory calcium-dependent phospholipase A2 that primarily targets extracellular phospholipids with implications in host antimicrobial defense, inflammatory response and tissue regeneration. Hydrolyzes the ester bond of the fatty acyl group attached at sn-2 position of phospholipids (phospholipase A2 activity) with preference for phosphatidylethanolamines and phosphatidylglycerols over phosphatidylcholines. Contributes to lipid remodeling of cellular membranes and generation of lipid mediators involved in pathogen clearance. Displays bactericidal activity against Gram-positive bacteria by directly hydrolyzing phospholipids of the bacterial membrane. Upon sterile inflammation, targets membrane phospholipids of extracellular mitochondria released from activated platelets, generating free unsaturated fatty acids such as arachidonate that is used by neighboring leukocytes to synthesize inflammatory eicosanoids such as leukotrienes. Simultaneously, by compromising mitochondrial membrane integrity, promotes the release in circulation of potent damage-associated molecular pattern molecules that activate the innate immune response. Plays a stem cell regulator role in the intestinal crypt. Within intracellular compartment mediates Paneth cell differentiation and its stem cell supporting functions by inhibiting Wnt signaling pathway in intestinal stem cell (ICS). Secreted in the intestinal lumen upon inflammation, acts in an autocrine way and promotes prostaglandin E2 synthesis that stimulates Wnt signaling pathway in ICS cells and tissue regeneration. May play a role in the biosynthesis of N-acyl ethanolamines that regulate energy metabolism and inflammation. Hydrolyzes N-acyl phosphatidylethanolamines to N-acyl lysophosphatidylethanolamines, which are further cleaved by a lysophospholipase D to release N-acyl ethanolamines. Independent of its catalytic activity, acts as a ligand for integrins. Binds to and activates integrins ITGAV:ITGB3, ITGA4:ITGB1 and ITGA5:ITGB1. Binds to a site (site 2) which is distinct from the classical ligand-binding site (site 1) and induces integrin conformational changes and enhanced ligand binding to site 1. Induces cell proliferation in an integrin-dependent manner. The sequence is that of Phospholipase A2, membrane associated (PLA2G2A) from Cavia porcellus (Guinea pig).